The sequence spans 599 residues: MFPAQDALPRGGLHLKEEPLLPSSLGSVRSWMQSAGILDSNTAAQSGVGLARAHFEKQPPSNLRKSNFFHFVLAMYDRQGQPVEVERTAFIDFVEKDREPGTEKTNNGIHYRLRLVYNNGLRTEQDLYVRLIDSMSKQAIIYEGQDKNPEMCRVLLTHEIMCSRCCDRKSCGNRNETPSDPVIIDRFFLKFFLKCNQNCLKNAGNPRDMRRFQVVVSTTVSVDGHVLAVSDNMFVHNNSKHGRRARRLDPSEAATPCIKAISPGEGWTTGGATVIIIGDNFFDGLQVVFGNVLLWSELITPHAIRVQTPPRHIPGVVEVTLSYKSKQFCKGAPGRFVYTALNEPTIDYGFQRLQKVIPRHPGDPERLPKEVLLKRAADLAEALYGVPSSNQELLLKRAADVAEALYSAPRAPAPLGPLAPSHPHPAVVGINAFSSPLAIAVGDTTPEPGYARSCGSASPRFAPSPGSQQSSYGSGLGAGLGSYGAPGVTGLGVPGSPSFLNGSTATSPFAIMPSSPPLAAASSMSLPAAAPTTSVFSFSPVNMICAVKQRSAFAPVLRPPSSPSQACPRAHREGLPDQPFEDTDKFHSAARGLQGLAYS.

Residues 64-67 are interaction with DNA; that stretch reads RKSN. The segment at 152–171 adopts a C5-type zinc-finger fold; it reads CRVLLTHEIMCSRCCDRKSC. Interaction with DNA regions lie at residues 198–205 and 237–240; these read NCLKNAGN and NNSK. The 84-residue stretch at 256–339 folds into the IPT/TIG domain; that stretch reads PCIKAISPGE…KGAPGRFVYT (84 aa). Disordered stretches follow at residues 449 to 473 and 556 to 586; these read GYAR…SSYG and VLRP…TDKF. The segment covering 464 to 473 has biased composition (low complexity); the sequence is SPGSQQSSYG.

The protein belongs to the COE family. In terms of assembly, forms either a homodimer or a heterodimer with a related family member. As to expression, expressed in the olfactory epithelium, including in both neuronal and basal cell layers. Absent in the vomeronasal organ. Absent from NK cells and CD8(+) T cells.

The protein localises to the nucleus. In terms of biological role, transcription factor. Positively modulates transcription, perhaps less strongly than other early B cell factor/EBF family proteins. Binds an EBF1/Olf-1 consensus site in vitro. In Mus musculus (Mouse), this protein is Transcription factor COE4 (Ebf4).